We begin with the raw amino-acid sequence, 89 residues long: Large ribosomal subunit protein bL27 (89 aa).

Residues 1–26 (MAHKKAGGSSRNGRDSAGQRRGVKRF) form a disordered region.

It belongs to the bacterial ribosomal protein bL27 family.

This chain is Large ribosomal subunit protein bL27, found in Nitratidesulfovibrio vulgaris (strain DSM 19637 / Miyazaki F) (Desulfovibrio vulgaris).